A 149-amino-acid polypeptide reads, in one-letter code: Calmodulin (149 aa).

Alanine 2 is modified (N-acetylalanine). 4 consecutive EF-hand domains span residues 8–43, 44–79, 81–116, and 117–149; these read EQISEFKEAFSLFDKDGDGTITTKELGTVMRSLGQN, PTEAELQDMINEIDTDGNGTIDFPEFLTLMARKLKD, DTEEELIEAFRVFDRDGDGYISADELRHVMTNLGEK, and LTNEEVDEMIREADIDGDGQINYEEFVKMMIAK. The Ca(2+) site is built by aspartate 21, aspartate 23, aspartate 25, threonine 27, glutamate 32, aspartate 57, aspartate 59, asparagine 61, threonine 63, glutamate 68, aspartate 94, aspartate 96, aspartate 98, tyrosine 100, glutamate 105, aspartate 130, aspartate 132, aspartate 134, glutamine 136, and glutamate 141.

It belongs to the calmodulin family.

It is found in the cytoplasm. Functionally, calmodulin mediates the control of a large number of enzymes, ion channels and other proteins by Ca(2+). Among the enzymes to be stimulated by the calmodulin-Ca(2+) complex are a number of protein kinases and phosphatases. The chain is Calmodulin from Plasmodium falciparum (isolate 3D7).